Consider the following 398-residue polypeptide: Bifunctional enzyme IspD/IspF (398 aa).

The 2-C-methyl-D-erythritol 4-phosphate cytidylyltransferase stretch occupies residues M1 to I234. The interval R235–T398 is 2-C-methyl-D-erythritol 2,4-cyclodiphosphate synthase. A divalent metal cation is bound by residues D241 and H243. 4-CDP-2-C-methyl-D-erythritol 2-phosphate-binding positions include D241–H243 and H267–S268. Residue H275 participates in a divalent metal cation binding. Residues D289–G291, T365–E368, F372, and R375 contribute to the 4-CDP-2-C-methyl-D-erythritol 2-phosphate site.

This sequence in the N-terminal section; belongs to the IspD/TarI cytidylyltransferase family. IspD subfamily. The protein in the C-terminal section; belongs to the IspF family. A divalent metal cation is required as a cofactor.

It catalyses the reaction 2-C-methyl-D-erythritol 4-phosphate + CTP + H(+) = 4-CDP-2-C-methyl-D-erythritol + diphosphate. The catalysed reaction is 4-CDP-2-C-methyl-D-erythritol 2-phosphate = 2-C-methyl-D-erythritol 2,4-cyclic diphosphate + CMP. It participates in isoprenoid biosynthesis; isopentenyl diphosphate biosynthesis via DXP pathway; isopentenyl diphosphate from 1-deoxy-D-xylulose 5-phosphate: step 2/6. It functions in the pathway isoprenoid biosynthesis; isopentenyl diphosphate biosynthesis via DXP pathway; isopentenyl diphosphate from 1-deoxy-D-xylulose 5-phosphate: step 4/6. Its function is as follows. Bifunctional enzyme that catalyzes the formation of 4-diphosphocytidyl-2-C-methyl-D-erythritol from CTP and 2-C-methyl-D-erythritol 4-phosphate (MEP) (IspD), and catalyzes the conversion of 4-diphosphocytidyl-2-C-methyl-D-erythritol 2-phosphate (CDP-ME2P) to 2-C-methyl-D-erythritol 2,4-cyclodiphosphate (ME-CPP) with a corresponding release of cytidine 5-monophosphate (CMP) (IspF). This chain is Bifunctional enzyme IspD/IspF, found in Nitrobacter winogradskyi (strain ATCC 25391 / DSM 10237 / CIP 104748 / NCIMB 11846 / Nb-255).